Reading from the N-terminus, the 245-residue chain is tRNA (guanine-N(1)-)-methyltransferase (245 aa).

Residues Gly111 and 131 to 136 (IGDYVL) contribute to the S-adenosyl-L-methionine site.

This sequence belongs to the RNA methyltransferase TrmD family. In terms of assembly, homodimer.

The protein localises to the cytoplasm. The enzyme catalyses guanosine(37) in tRNA + S-adenosyl-L-methionine = N(1)-methylguanosine(37) in tRNA + S-adenosyl-L-homocysteine + H(+). Functionally, specifically methylates guanosine-37 in various tRNAs. The protein is tRNA (guanine-N(1)-)-methyltransferase of Staphylococcus haemolyticus (strain JCSC1435).